The following is a 353-amino-acid chain: Ribosome biogenesis protein BRX1 homolog (353 aa).

Positions 1 to 50 (MAATKRKRRGGLEVQAKKPKRSSKDAGQPAKQADVAKEAEEENRDRIPGP) are disordered. Basic and acidic residues predominate over residues 34–47 (DVAKEAEEENRDRI). In terms of domain architecture, Brix spans 60–249 (ERILIFSSRG…LIKIFQGSFG (190 aa)). Lys160 participates in a covalent cross-link: Glycyl lysine isopeptide (Lys-Gly) (interchain with G-Cter in SUMO2). Ser261 carries the post-translational modification Phosphoserine. Position 276 is an N6-acetyllysine (Lys276). Residues Lys314 and Lys322 each participate in a glycyl lysine isopeptide (Lys-Gly) (interchain with G-Cter in SUMO2) cross-link. Basic residues predominate over residues 334 to 344 (RRIYKRHRKLQ). The tract at residues 334-353 (RRIYKRHRKLQQKMSRGSAK) is disordered.

Belongs to the BRX1 family.

The protein localises to the nucleus. It is found in the nucleolus. Its function is as follows. Required for biogenesis of the 60S ribosomal subunit. The polypeptide is Ribosome biogenesis protein BRX1 homolog (Brix1) (Mus musculus (Mouse)).